A 28-amino-acid polypeptide reads, in one-letter code: M-poneritoxin-Dq4a (28 aa).

Ala28 carries the alanine amide modification.

In terms of tissue distribution, expressed by the venom gland.

Its subcellular location is the secreted. Its function is as follows. The synthetic peptide has weak antimicrobial activity against Gram-negative bacterium E.coli ATCC 10536. It does not show antimicrobial activity against the Gram-positive bacteria B.amyloliquefacies S499, L.monocytogenes 2231 and S.aureus ATCC 29213, against the Gram-negative bacteria P.putida BTP1 and P.aeruginosa PaO1, or against the fungi S.cerevisiae, R.mucilaginosa, C.cucumerinum, F.oxysporum and B.cinerea. The protein is M-poneritoxin-Dq4a of Dinoponera quadriceps (South American ant).